Consider the following 298-residue polypeptide: Ribosomal RNA small subunit methyltransferase H (298 aa).

Residues 37-39, Asp-57, Leu-91, Asp-105, and Gln-112 each bind S-adenosyl-L-methionine; that span reads GGH.

Belongs to the methyltransferase superfamily. RsmH family.

The protein localises to the cytoplasm. The enzyme catalyses cytidine(1402) in 16S rRNA + S-adenosyl-L-methionine = N(4)-methylcytidine(1402) in 16S rRNA + S-adenosyl-L-homocysteine + H(+). Functionally, specifically methylates the N4 position of cytidine in position 1402 (C1402) of 16S rRNA. The sequence is that of Ribosomal RNA small subunit methyltransferase H from Kosmotoga olearia (strain ATCC BAA-1733 / DSM 21960 / TBF 19.5.1).